The chain runs to 720 residues: Polyribonucleotide nucleotidyltransferase (720 aa).

Positions 484 and 490 each coordinate Mg(2+). Residues 551 to 610 form the KH domain; the sequence is PRMYKINIDPSKIGSVIGSGGKTIRSIIEQTNTTVDIENDGTVVIGAIDEASAKKAIKII. Residues 620–688 form the S1 motif domain; it reads GSIYTGKVTR…NQGRVNLSHR (69 aa). Residues 697–720 form a disordered region; the sequence is PISRNRDSQPRRPGPFRPSDRSNS.

It belongs to the polyribonucleotide nucleotidyltransferase family. Mg(2+) serves as cofactor.

Its subcellular location is the cytoplasm. It catalyses the reaction RNA(n+1) + phosphate = RNA(n) + a ribonucleoside 5'-diphosphate. In terms of biological role, involved in mRNA degradation. Catalyzes the phosphorolysis of single-stranded polyribonucleotides processively in the 3'- to 5'-direction. This is Polyribonucleotide nucleotidyltransferase from Dehalococcoides mccartyi (strain ATCC BAA-2100 / JCM 16839 / KCTC 5957 / BAV1).